Consider the following 111-residue polypeptide: Large ribosomal subunit protein uL22 (111 aa).

This sequence belongs to the universal ribosomal protein uL22 family. As to quaternary structure, part of the 50S ribosomal subunit.

Functionally, this protein binds specifically to 23S rRNA; its binding is stimulated by other ribosomal proteins, e.g. L4, L17, and L20. It is important during the early stages of 50S assembly. It makes multiple contacts with different domains of the 23S rRNA in the assembled 50S subunit and ribosome. The globular domain of the protein is located near the polypeptide exit tunnel on the outside of the subunit, while an extended beta-hairpin is found that lines the wall of the exit tunnel in the center of the 70S ribosome. This Protochlamydia amoebophila (strain UWE25) protein is Large ribosomal subunit protein uL22.